Reading from the N-terminus, the 815-residue chain is Lon protease 2 (815 aa).

The Lon N-terminal domain maps to 19-212 (LPVLPLINTV…RLSVVLSQEI (194 aa)). 365–372 (GPPGVGKT) serves as a coordination point for ATP. One can recognise a Lon proteolytic domain in the interval 601–782 (RDEIGVATGM…DEVLPIAFVS (182 aa)). Catalysis depends on residues Ser688 and Lys731.

It belongs to the peptidase S16 family. As to quaternary structure, homohexamer. Organized in a ring with a central cavity.

It is found in the cytoplasm. It catalyses the reaction Hydrolysis of proteins in presence of ATP.. In terms of biological role, ATP-dependent serine protease that mediates the selective degradation of mutant and abnormal proteins as well as certain short-lived regulatory proteins. Required for cellular homeostasis and for survival from DNA damage and developmental changes induced by stress. Degrades polypeptides processively to yield small peptide fragments that are 5 to 10 amino acids long. Binds to DNA in a double-stranded, site-specific manner. The protein is Lon protease 2 of Herpetosiphon aurantiacus (strain ATCC 23779 / DSM 785 / 114-95).